Here is a 359-residue protein sequence, read N- to C-terminus: Membrane-bound lytic murein transglycosylase C (359 aa).

A signal peptide spans 1-16; that stretch reads MKKYLALALIAPLLIS. A lipid anchor (N-palmitoyl cysteine) is attached at Cys17. The S-diacylglycerol cysteine moiety is linked to residue Cys17.

This sequence belongs to the transglycosylase Slt family.

The protein resides in the cell outer membrane. It carries out the reaction Exolytic cleavage of the (1-&gt;4)-beta-glycosidic linkage between N-acetylmuramic acid (MurNAc) and N-acetylglucosamine (GlcNAc) residues in peptidoglycan, from either the reducing or the non-reducing ends of the peptidoglycan chains, with concomitant formation of a 1,6-anhydrobond in the MurNAc residue.. Murein-degrading enzyme. May play a role in recycling of muropeptides during cell elongation and/or cell division. The sequence is that of Membrane-bound lytic murein transglycosylase C from Escherichia coli O81 (strain ED1a).